We begin with the raw amino-acid sequence, 211 residues long: Proteasome subunit beta 1 (211 aa).

Residues 1–17 (MVIMGNELQLENKILKG) constitute a propeptide, removed in mature form; by autocatalysis. The active-site Nucleophile is the T18.

This sequence belongs to the peptidase T1B family. As to quaternary structure, the 20S proteasome core is composed of 14 alpha and 14 beta subunits that assemble into four stacked heptameric rings, resulting in a barrel-shaped structure. The two inner rings, each composed of seven catalytic beta subunits, are sandwiched by two outer rings, each composed of seven alpha subunits. The catalytic chamber with the active sites is on the inside of the barrel. Has a gated structure, the ends of the cylinder being occluded by the N-termini of the alpha-subunits. Is capped at one or both ends by the proteasome regulatory ATPase, PAN.

The protein localises to the cytoplasm. It catalyses the reaction Cleavage of peptide bonds with very broad specificity.. With respect to regulation, the formation of the proteasomal ATPase PAN-20S proteasome complex, via the docking of the C-termini of PAN into the intersubunit pockets in the alpha-rings, triggers opening of the gate for substrate entry. Interconversion between the open-gate and close-gate conformations leads to a dynamic regulation of the 20S proteasome proteolysis activity. In terms of biological role, component of the proteasome core, a large protease complex with broad specificity involved in protein degradation. The sequence is that of Proteasome subunit beta 1 from Saccharolobus islandicus (strain M.16.27) (Sulfolobus islandicus).